Consider the following 385-residue polypeptide: S-adenosylmethionine synthase (385 aa).

ATP is bound at residue His15. Asp17 contacts Mg(2+). Glu43 contacts K(+). The L-methionine site is built by Glu56 and Gln99. Residues 99–109 (QSVDIAQGVDR) are flexible loop. ATP-binding positions include 164–166 (DAK), 230–231 (RF), Asp239, 245–246 (RK), and Lys266. An L-methionine-binding site is contributed by Asp239. L-methionine is bound at residue Lys270.

This sequence belongs to the AdoMet synthase family. In terms of assembly, homotetramer; dimer of dimers. Mg(2+) is required as a cofactor. K(+) serves as cofactor.

The protein localises to the cytoplasm. The catalysed reaction is L-methionine + ATP + H2O = S-adenosyl-L-methionine + phosphate + diphosphate. The protein operates within amino-acid biosynthesis; S-adenosyl-L-methionine biosynthesis; S-adenosyl-L-methionine from L-methionine: step 1/1. Catalyzes the formation of S-adenosylmethionine (AdoMet) from methionine and ATP. The overall synthetic reaction is composed of two sequential steps, AdoMet formation and the subsequent tripolyphosphate hydrolysis which occurs prior to release of AdoMet from the enzyme. This chain is S-adenosylmethionine synthase, found in Alkalilimnicola ehrlichii (strain ATCC BAA-1101 / DSM 17681 / MLHE-1).